Consider the following 227-residue polypeptide: Ribonuclease HII (227 aa).

An RNase H type-2 domain is found at 16 to 205 (SLLAGVDEVG…VKMALDAVGV (190 aa)). Residues D22, E23, and D114 each coordinate a divalent metal cation.

The protein belongs to the RNase HII family. Requires Mn(2+) as cofactor. The cofactor is Mg(2+).

Its subcellular location is the cytoplasm. The enzyme catalyses Endonucleolytic cleavage to 5'-phosphomonoester.. In terms of biological role, endonuclease that specifically degrades the RNA of RNA-DNA hybrids. The protein is Ribonuclease HII of Marinobacter nauticus (strain ATCC 700491 / DSM 11845 / VT8) (Marinobacter aquaeolei).